The chain runs to 433 residues: Oxaloacetate decarboxylase beta chain 2 (433 aa).

10 helical membrane passes run 16–36 (LGAG…LAIA), 42–62 (LLLL…AGMA), 122–142 (VLAL…VIFM), 168–188 (FGIF…LIAF), 190–210 (LPQA…AIYL), 216–236 (PELL…VPLI), 266–286 (ILFP…AAPL), 311–331 (NGLI…KLVA), 340–360 (LGIL…GVLM), and 413–433 (VAGV…VLAM).

The protein belongs to the GcdB/MmdB/OadB family. In terms of assembly, heterotrimer of an alpha, a beta and a gamma subunit. It depends on Na(+) as a cofactor.

It is found in the cell membrane. It catalyses the reaction oxaloacetate + 2 Na(+)(in) + H(+) = pyruvate + 2 Na(+)(out) + CO2. Catalyzes the decarboxylation of oxaloacetate coupled to Na(+) translocation. The sequence is that of Oxaloacetate decarboxylase beta chain 2 (oadB2) from Salmonella typhi.